The primary structure comprises 1071 residues: MKLIYTEMSYSMTEILVNEARKAADQGYRVFYIAPNSLSFEKEREVLTLLPERGTFSIIVTRFVQMSRYFTVESSPSKQHLDDTTLAMIFYRALMQLKPEDLPSYGRLQNNSVFIEQLVELYKELKNAQLSVHDLTGLDHPQKQEDLIKIIELAETIMIQQDYNQDSPLQSFARAIKLGLLNNQLSKTVVVIDGFSRFSAEEDYLLSLLNNNCQEVIIGSYVSQKAYQKSFIKGNIYEASLHFLQDLAQKYHIKPVFATSNQVFKPAFSRLTQLFEATHDFSQVDWQLQKNDLDHFSLWQCHHQKEEIEHVAKSIRQKLYEGYRYKDILVLLGDMDAYQLQIGPIFDKFEIPYYLGKAEPMAAHPLVQFIESLERSQRYNWRREDILNMLKSGLFGCFDDSDIDRFEEYTQFADIKGFTKFSKPFTINSSRQYPLDFLNEMRQDIVLPLQELFKSQKQLGASLVDKLILFLKKIRLAENMQGLAQSQLEVEKNEEVWKRFTDILTSFHHIFGQEKLRLSDCLALIKTGMKSAQYRVVPATLDVVTIKSYDLVQPHSKPFVYAIGLTQSHFPKQIHHSGLLSDQERARINEIRNYRHFDIASAENSKKNHQTALSLFNAATKELVLSVPTVINETFDDLSPYLKELINFGLPLLDKGKNYLSYDNSDIGNYKALLSQIIAINRQDLIEMSDQDKMFWTVVLRYLRKQLRKQQLELPTSDYRLSTKPLSKEVIEVCFPKGIPLKLSATALTVFYNNQYNYFLKYVLNLNKTESIHPDSRIHGQYLHRVFERLMKDHTQEPFDNKLKQAIYHTNQESFFQQVYQDNAEAEYSLAILEDIVRSTAPILQLNQNIKVIDQEKNFHLDMGNEILVHGIIDRIDQLSDGSLGVVDYKSSANQFDIGTFYNGLSPQLVTYLAALKQIAPHDINQLFGAMYLHLQDPKLDLVTFKQIDNTLVESIYKALTYKGIFSEVEKEHLSTGAYQTKNALYSNDELETLLNYNKYLYLKAVKHIKKGHFLINPYTSDGKTVQGDQLKAITRFEADLDMAQARRLVTLPAKEKKECFLTLMRKESHL.

The protein belongs to the helicase family. AddB/RexB type 2 subfamily. In terms of assembly, heterodimer of AddA and RexB. Requires Mg(2+) as cofactor.

In terms of biological role, the heterodimer acts as both an ATP-dependent DNA helicase and an ATP-dependent, dual-direction single-stranded exonuclease. Recognizes the chi site generating a DNA molecule suitable for the initiation of homologous recombination. This subunit has 5' -&gt; 3' nuclease activity but not helicase activity. The chain is ATP-dependent helicase/deoxyribonuclease subunit B from Streptococcus pyogenes serotype M18 (strain MGAS8232).